The chain runs to 339 residues: Hairy/enhancer-of-split related with YRPW motif protein 2 (339 aa).

Positions 1-52 are disordered; that stretch reads MKRPCEETTSESDLDETIDVGSENNYPGHATSSVMRSNSPTTTSQIMARKKR. Positions 8–18 are enriched in acidic residues; the sequence is TTSESDLDETI. A compositionally biased stretch (polar residues) spans 22-46; sequence SENNYPGHATSSVMRSNSPTTTSQI. The interval 47-116 is transcriptional repression and interaction with NCOR1 and SIN3A; it reads MARKKRRGII…GGKGYFDAHA (70 aa). A bHLH domain is found at 48–103; sequence ARKKRRGIIEKRRRDRINNSLSELRRLVPTAFEKQGSAKLEKAEILQMTVDHLKML. Positions 122–157 constitute an Orange domain; it reads MSIGFRECLTEVARYLSSVEGLDPSDPLRVRLVSHL. Residues 310 to 339 form a disordered region; the sequence is SVSAASSPQQTSTGTNNKPYQPWGTEVGAF. Residues 318–328 show a composition bias toward polar residues; sequence QQTSTGTNNKP. Positions 329–332 match the YQPW motif motif; the sequence is YQPW.

It belongs to the HEY family. In terms of assembly, may self-associate. Interacts with ARNT. Interacts with GATA4, GATA6, HES1 and HEYL. Interacts with HDAC1, NCOR1 and SIN3A. Highly expressed in the aorta, lower expression detected in the heart, brain, kidney, lung, muscle, ovary and testis.

The protein resides in the nucleus. Functionally, transcriptional repressor which functions as a downstream effector of Notch signaling in cardiovascular development. Specifically required for the Notch-induced endocardial epithelial to mesenchymal transition, which is itself criticial for cardiac valve and septum development. May be required in conjunction with HEY1 to specify arterial cell fate or identity. Promotes maintenance of neuronal precursor cells and glial versus neuronal fate specification. Binds preferentially to the canonical E box sequence 5'-CACGTG-3'. Represses transcription by the cardiac transcriptional activators GATA4 and GATA6 and by the neuronal bHLH factors ASCL1/MASH1 and NEUROD4/MATH3. In Mus musculus (Mouse), this protein is Hairy/enhancer-of-split related with YRPW motif protein 2 (Hey2).